Consider the following 213-residue polypeptide: ATP phosphoribosyltransferase (213 aa).

It belongs to the ATP phosphoribosyltransferase family. Short subfamily. In terms of assembly, heteromultimer composed of HisG and HisZ subunits.

Its subcellular location is the cytoplasm. It catalyses the reaction 1-(5-phospho-beta-D-ribosyl)-ATP + diphosphate = 5-phospho-alpha-D-ribose 1-diphosphate + ATP. The protein operates within amino-acid biosynthesis; L-histidine biosynthesis; L-histidine from 5-phospho-alpha-D-ribose 1-diphosphate: step 1/9. Catalyzes the condensation of ATP and 5-phosphoribose 1-diphosphate to form N'-(5'-phosphoribosyl)-ATP (PR-ATP). Has a crucial role in the pathway because the rate of histidine biosynthesis seems to be controlled primarily by regulation of HisG enzymatic activity. In Bacillus subtilis (strain 168), this protein is ATP phosphoribosyltransferase (hisG).